The primary structure comprises 198 residues: Nucleoid occlusion factor SlmA (198 aa).

Positions 9 to 70 constitute an HTH tetR-type domain; the sequence is RNRREEILQA…SLIEFIEDTL (62 aa). Positions 33 to 52 form a DNA-binding region, H-T-H motif; that stretch reads TTAKLAANVGVSEAALYRHF. Positions 117-144 form a coiled coil; sequence EQDRLQGRINQLFERIEAQLRQVLKERR.

It belongs to the nucleoid occlusion factor SlmA family. As to quaternary structure, homodimer. Interacts with FtsZ.

It is found in the cytoplasm. The protein resides in the nucleoid. Functionally, required for nucleoid occlusion (NO) phenomenon, which prevents Z-ring formation and cell division over the nucleoid. Acts as a DNA-associated cell division inhibitor that binds simultaneously chromosomal DNA and FtsZ, and disrupts the assembly of FtsZ polymers. SlmA-DNA-binding sequences (SBS) are dispersed on non-Ter regions of the chromosome, preventing FtsZ polymerization at these regions. This Edwardsiella ictaluri (strain 93-146) protein is Nucleoid occlusion factor SlmA.